A 163-amino-acid chain; its full sequence is Large ribosomal subunit protein uL10 (163 aa).

The protein belongs to the universal ribosomal protein uL10 family. As to quaternary structure, part of the ribosomal stalk of the 50S ribosomal subunit. The N-terminus interacts with L11 and the large rRNA to form the base of the stalk. The C-terminus forms an elongated spine to which L12 dimers bind in a sequential fashion forming a multimeric L10(L12)X complex.

Its function is as follows. Forms part of the ribosomal stalk, playing a central role in the interaction of the ribosome with GTP-bound translation factors. The polypeptide is Large ribosomal subunit protein uL10 (Histophilus somni (strain 129Pt) (Haemophilus somnus)).